The sequence spans 458 residues: Divalent metal cation transporter MntH (458 aa).

The next 11 helical transmembrane spans lie at Gly-38 to Met-58, Ser-76 to Ala-96, Gly-119 to Ile-139, Met-151 to Met-171, Ala-180 to Ala-200, Met-223 to Gly-243, Leu-275 to Gly-295, Ile-315 to Ser-335, Leu-370 to Ile-390, Leu-393 to Val-413, and Phe-437 to Val-457.

This sequence belongs to the NRAMP family.

It is found in the cell membrane. H(+)-stimulated, divalent metal cation uptake system. The chain is Divalent metal cation transporter MntH from Lacticaseibacillus casei (strain BL23) (Lactobacillus casei).